The primary structure comprises 872 residues: uncharacterized protein (872 aa).

Residues 496–524 (LQQHHQDISAMQQQILEEKNQLRRATIDV) adopt a coiled-coil conformation. Disordered regions lie at residues 595–736 (RPAV…SVQQ) and 844–872 (TKEN…PQAV). 2 stretches are compositionally biased toward polar residues: residues 615 to 659 (QNGN…QTTF) and 670 to 686 (PYAS…NNVV). Positions 687–736 (QQYQSYYDNPSNQQSNQQSNQQSNQQPNQQPNQQPNQQPNQQPNQQSVQQ) are enriched in low complexity.

It localises to the virion. This is an uncharacterized protein from Acanthamoeba polyphaga mimivirus (APMV).